Reading from the N-terminus, the 341-residue chain is NADH-quinone oxidoreductase subunit H 1 (341 aa).

Transmembrane regions (helical) follow at residues 13 to 33, 82 to 102, 115 to 135, 161 to 181, 190 to 210, 248 to 268, 277 to 297, and 317 to 337; these read LVVIGQSLLLLILLLITIAYI, GVFLLAPLVSCVLALAAWAVI, VGVLYILAVSSLSVYGIIMAG, IGFVIIAVLLCVGSLNLTAIV, LLGWYWLPLFPVFVIFYVSAL, YVAITTMCAMGAILFLGGWLP, WVPGIIWFMLKGFFMFFLFAM, and VFLPLSLVMVVIVAGVLQFAG.

It belongs to the complex I subunit 1 family. As to quaternary structure, NDH-1 is composed of 14 different subunits. Subunits NuoA, H, J, K, L, M, N constitute the membrane sector of the complex.

The protein resides in the cell inner membrane. It catalyses the reaction a quinone + NADH + 5 H(+)(in) = a quinol + NAD(+) + 4 H(+)(out). In terms of biological role, NDH-1 shuttles electrons from NADH, via FMN and iron-sulfur (Fe-S) centers, to quinones in the respiratory chain. The immediate electron acceptor for the enzyme in this species is believed to be ubiquinone. Couples the redox reaction to proton translocation (for every two electrons transferred, four hydrogen ions are translocated across the cytoplasmic membrane), and thus conserves the redox energy in a proton gradient. This subunit may bind ubiquinone. This chain is NADH-quinone oxidoreductase subunit H 1, found in Rhodopseudomonas palustris (strain BisB18).